Here is a 1460-residue protein sequence, read N- to C-terminus: Centrosomal protein of 164 kDa (1460 aa).

The interval 1–194 (MAGRPLRIGD…PSQGLKTSAY (194 aa)) is interaction with ATRIP. One can recognise a WW domain in the interval 56 to 89 (APLPGEWKPCQDITGDIYYFNFANGQSMWDHPCD). The disordered stretch occupies residues 107 to 135 (GAIKKKKKKKEKKDKKDRDPPKSSLALGS). Over residues 109 to 119 (IKKKKKKKEKK) the composition is skewed to basic residues. A Phosphoserine; by ATR and ATM modification is found at Ser-186. The residue at position 201 (Ser-201) is a Phosphoserine. Disordered regions lie at residues 213–412 (GLGE…HGLD), 440–593 (AQQP…AALK), and 658–719 (EEAR…QKNR). Positions 217-227 (ETNEEDEEESD) are enriched in acidic residues. Residues 256 to 270 (ESLRTSQPEEKKDVS) show a composition bias toward basic and acidic residues. Over residues 285–296 (SSPGADSSLSSA) the composition is skewed to low complexity. 2 stretches are compositionally biased toward basic and acidic residues: residues 310–323 (LPEK…EPKI) and 357–367 (EGSRREEAAKE). The segment covering 453–464 (QSSQDELQSKQS) has biased composition (low complexity). Basic and acidic residues predominate over residues 465–481 (KGLEERLSPPLPHEERA). Residues 514–525 (SAASLSLQLSLQ) are compositionally biased toward low complexity. Basic and acidic residues predominate over residues 537 to 546 (EKGKEQHSQA). A Phosphoserine modification is found at Ser-566. Composition is skewed to basic and acidic residues over residues 658 to 668 (EEARMREEESQ) and 686 to 719 (DQIR…QKNR). Positions 1154 to 1206 (GIKALEDMRKNLEKETRHLDEMKSAMRKGHNLLKKKEEKLNQLESSLWEEASD) form a coiled coil. The disordered stretch occupies residues 1290–1310 (PPPLLASMPAQLPPRDPKSTP). Phosphoserine is present on residues Ser-1386, Ser-1388, and Ser-1443.

Interacts (via N-terminus) with ATRIP. Interacts with ATM, ATR and MDC1. Interacts with XPA (via N-terminus) upon UV irradiation. Interacts with CEP83, CCDC92, TTBK2, DVL3, NPHP3 and weakly with NPHP4. Interacts with DZIP1. Phosphorylation at Ser-186 is induced upon DNA-damage caused by treatment with IR irradiation, UV irradiation, hydroxyurea or amphidicolin. Also MDC1-mediated chromatin remodeling is critical for DNA damage-induced phosphorylation. As to expression, expressed in several cell lines.

Its subcellular location is the cytoplasm. The protein localises to the cytoskeleton. It localises to the microtubule organizing center. The protein resides in the centrosome. It is found in the centriole. Its subcellular location is the nucleus. In terms of biological role, plays a role in microtubule organization and/or maintenance for the formation of primary cilia (PC), a microtubule-based structure that protrudes from the surface of epithelial cells. Plays a critical role in G2/M checkpoint and nuclear divisions. A key player in the DNA damage-activated ATR/ATM signaling cascade since it is required for the proper phosphorylation of H2AX, RPA, CHEK2 and CHEK1. Plays a critical role in chromosome segregation, acting as a mediator required for the maintenance of genomic stability through modulation of MDC1, RPA and CHEK1. This is Centrosomal protein of 164 kDa (CEP164) from Homo sapiens (Human).